A 328-amino-acid polypeptide reads, in one-letter code: Pyruvate dehydrogenase E1 component subunit beta (328 aa).

Glutamate 60 lines the thiamine diphosphate pocket. K(+) is bound by residues isoleucine 113, isoleucine 162, and asparagine 166.

Heterodimer of an alpha and a beta chain. Requires thiamine diphosphate as cofactor.

Its subcellular location is the plastid. The protein resides in the chloroplast. It catalyses the reaction N(6)-[(R)-lipoyl]-L-lysyl-[protein] + pyruvate + H(+) = N(6)-[(R)-S(8)-acetyldihydrolipoyl]-L-lysyl-[protein] + CO2. The pyruvate dehydrogenase complex catalyzes the overall conversion of pyruvate to acetyl-CoA and CO(2). It contains multiple copies of three enzymatic components: pyruvate dehydrogenase (E1), dihydrolipoamide acetyltransferase (E2) and lipoamide dehydrogenase (E3). This is Pyruvate dehydrogenase E1 component subunit beta (pdhB) from Staurastrum punctulatum (Green alga).